The sequence spans 96 residues: Muconolactone Delta-isomerase (96 aa).

Belongs to the muconolactone Delta-isomerase family. As to quaternary structure, homodecamer.

It carries out the reaction (S)-muconolactone = (4,5-dihydro-5-oxofuran-2-yl)-acetate. Its pathway is aromatic compound metabolism; beta-ketoadipate pathway; 5-oxo-4,5-dihydro-2-furylacetate from catechol: step 3/3. The chain is Muconolactone Delta-isomerase (catC) from Acinetobacter baylyi (strain ATCC 33305 / BD413 / ADP1).